Consider the following 69-residue polypeptide: Double-strand break reduction protein (69 aa).

Helps to maintain the integrity of the chromosome by lowering the steady-state level of double strand breaks. This region of DNA acts as an antitoxin to toxin RalR, a DNase, but it seems to be sRNA RalA that has the antitoxin activity and not this putative protein. Therefore the identity of this as a protein-coding gene has been cast into doubt. This Escherichia coli (strain K12) protein is Double-strand break reduction protein.